A 901-amino-acid chain; its full sequence is Pyruvate, phosphate dikinase (901 aa).

The tract at residues 1-321 (MNIAKSIHFL…WLIEQKPVEA (321 aa)) is N-terminal. The interval 322-380 (KSTISLVRLLLDLYEREVVDAEYVVKSVKPGQLNEILHPVIDMTSVTGLKSSQGGIIGV) is linker 1. The central stretch occupies residues 381-482 (PGAAVGRVYF…TINEGDFVTL (102 aa)). Serine 440 is modified (phosphoserine; by PDRP1). Catalysis depends on histidine 442, which acts as the Tele-phosphohistidine intermediate. The linker 2 stretch occupies residues 483–522 (NVPYYGESTLYMGAAQLIEPDPETSGLVSFIELAKGFVRS). A C-terminal region spans residues 523–901 (FHVRANADSP…SAKSGGRRAR (379 aa)). Residues arginine 550, arginine 606, glutamate 750, glycine 771, threonine 772, asparagine 773, and aspartate 774 each coordinate substrate. Mg(2+) is bound at residue glutamate 750. Aspartate 774 lines the Mg(2+) pocket. Cysteine 835 acts as the Proton donor in catalysis. The disordered stretch occupies residues 879–901 (EKEGRKPAWRGRSSAKSGGRRAR).

The protein belongs to the PEP-utilizing enzyme family. As to quaternary structure, homodimer. The cofactor is Mg(2+). Phosphorylation of Ser-440 in the dark inactivates the enzyme. Dephosphorylation upon light stimulation reactivates the enzyme.

It carries out the reaction pyruvate + phosphate + ATP = phosphoenolpyruvate + AMP + diphosphate + H(+). Its activity is regulated as follows. Activated by light-induced dephosphorylation. Inhibited by dark-induced phosphorylation. Both reactions are catalyzed by PDRP1. Functionally, catalyzes the reversible phosphorylation of pyruvate and phosphate. The polypeptide is Pyruvate, phosphate dikinase (ppdK) (Treponema pallidum (strain Nichols)).